The sequence spans 334 residues: Nucleoid-associated protein plu2870 (334 aa).

Belongs to the YejK family.

The protein resides in the cytoplasm. The protein localises to the nucleoid. In Photorhabdus laumondii subsp. laumondii (strain DSM 15139 / CIP 105565 / TT01) (Photorhabdus luminescens subsp. laumondii), this protein is Nucleoid-associated protein plu2870.